The primary structure comprises 396 residues: Ribosomal RNA large subunit methyltransferase I (396 aa).

A PUA domain is found at 2–81 (SVRLVLAKGR…ESIDIAFFSR (80 aa)).

This sequence belongs to the methyltransferase superfamily. RlmI family.

The protein resides in the cytoplasm. The catalysed reaction is cytidine(1962) in 23S rRNA + S-adenosyl-L-methionine = 5-methylcytidine(1962) in 23S rRNA + S-adenosyl-L-homocysteine + H(+). Specifically methylates the cytosine at position 1962 (m5C1962) of 23S rRNA. This Shigella flexneri protein is Ribosomal RNA large subunit methyltransferase I.